Reading from the N-terminus, the 621-residue chain is tRNA uridine 5-carboxymethylaminomethyl modification enzyme MnmG (621 aa).

8 to 13 contributes to the FAD binding site; the sequence is GAGHAG. An NAD(+)-binding site is contributed by 269–283; the sequence is GPRYCPSVEDKIFRF.

It belongs to the MnmG family. In terms of assembly, homodimer. Heterotetramer of two MnmE and two MnmG subunits. It depends on FAD as a cofactor.

Its subcellular location is the cytoplasm. NAD-binding protein involved in the addition of a carboxymethylaminomethyl (cmnm) group at the wobble position (U34) of certain tRNAs, forming tRNA-cmnm(5)s(2)U34. This Chlorobium chlorochromatii (strain CaD3) protein is tRNA uridine 5-carboxymethylaminomethyl modification enzyme MnmG.